The primary structure comprises 365 residues: Probable receptor-like protein kinase At2g47060 (365 aa).

Residues 18 to 48 (DYGGRHNQAKHFPPGNDARHHQASETAQKGP) form a disordered region. Residues 73–353 (FGSNSLIGEG…IVVKALQPLL (281 aa)) form the Protein kinase domain. Residues 79-87 (IGEGSYGRV) and lysine 101 each bind ATP. Tyrosine 145 is modified (phosphotyrosine). The active-site Proton acceptor is the aspartate 203. 2 positions are modified to phosphoserine: serine 207 and serine 237. Phosphothreonine occurs at positions 238 and 243. At tyrosine 251 the chain carries Phosphotyrosine.

It belongs to the protein kinase superfamily. Ser/Thr protein kinase family.

The catalysed reaction is L-seryl-[protein] + ATP = O-phospho-L-seryl-[protein] + ADP + H(+). It carries out the reaction L-threonyl-[protein] + ATP = O-phospho-L-threonyl-[protein] + ADP + H(+). The sequence is that of Probable receptor-like protein kinase At2g47060 from Arabidopsis thaliana (Mouse-ear cress).